The sequence spans 462 residues: Elongation factor 1-alpha, somatic form (462 aa).

Gly-2 carries the n,N,N-trimethylglycine modification. The 238-residue stretch at 5–242 folds into the tr-type G domain; sequence KTHINIVVIG…DCILPPSRPT (238 aa). Positions 14-21 are G1; sequence GHVDSGKS. A GTP-binding site is contributed by 14-21; that stretch reads GHVDSGKS. A G2 region spans residues 70–74; it reads GITID. The tract at residues 91 to 94 is G3; the sequence is DAPG. Residues 91 to 95 and 153 to 156 contribute to the GTP site; these read DAPGH and NKMD. Residues 153–156 form a G4 region; sequence NKMD. Positions 194–196 are G5; it reads SGW. 5-glutamyl glycerylphosphorylethanolamine occurs at positions 301 and 374.

Belongs to the TRAFAC class translation factor GTPase superfamily. Classic translation factor GTPase family. EF-Tu/EF-1A subfamily.

The protein resides in the cytoplasm. In terms of biological role, this protein promotes the GTP-dependent binding of aminoacyl-tRNA to the A-site of ribosomes during protein biosynthesis. This is Elongation factor 1-alpha, somatic form (eef1as) from Xenopus laevis (African clawed frog).